A 155-amino-acid polypeptide reads, in one-letter code: MTKREEYELKAEQLLTPIMEENNFELVDVEYVKEVGNWYLRAYIDKEGGITVDDCEVVSRRFSDLLDEKDFIPDAYILEVSSPGLGRQLKKDKDFKRSLGEEVEIKLYKAINKQKDFEGILTDFDQEKLIIEQADGTTMEFARADIAMVRLALDF.

Belongs to the RimP family.

The protein resides in the cytoplasm. Functionally, required for maturation of 30S ribosomal subunits. The polypeptide is Ribosome maturation factor RimP (Lachnoclostridium phytofermentans (strain ATCC 700394 / DSM 18823 / ISDg) (Clostridium phytofermentans)).